The following is an 842-amino-acid chain: Leucine--tRNA ligase (842 aa).

Positions 44–55 match the 'HIGH' region motif; the sequence is PYPSANGLHVGH. The 'KMSKS' region motif lies at 619 to 623; that stretch reads KMSKS. Lys622 is a binding site for ATP.

This sequence belongs to the class-I aminoacyl-tRNA synthetase family.

It localises to the cytoplasm. The enzyme catalyses tRNA(Leu) + L-leucine + ATP = L-leucyl-tRNA(Leu) + AMP + diphosphate. The polypeptide is Leucine--tRNA ligase (Borrelia hermsii (strain HS1 / DAH)).